The primary structure comprises 154 residues: Ribonuclease H (154 aa).

One can recognise an RNase H type-1 domain in the interval Met1–Gly142. Mg(2+)-binding residues include Asp10, Glu48, Asp70, and Asp134.

It belongs to the RNase H family. Monomer. Mg(2+) serves as cofactor.

The protein resides in the cytoplasm. It catalyses the reaction Endonucleolytic cleavage to 5'-phosphomonoester.. Its function is as follows. Endonuclease that specifically degrades the RNA of RNA-DNA hybrids. The sequence is that of Ribonuclease H from Pseudoalteromonas translucida (strain TAC 125).